Consider the following 262-residue polypeptide: Adenosylcobinamide-GDP ribazoletransferase (262 aa).

4 helical membrane passes run 43–63, 121–141, 145–165, and 195–215; these read PLAGILIALPAAVTAVLLGAI, VALILSFGIRVSALAAFLPLL, GGGVALLATAALSRAAMVWHW, and GVILALVLFFLSGIPTVAVLL.

It belongs to the CobS family. The cofactor is Mg(2+).

Its subcellular location is the cell inner membrane. It carries out the reaction alpha-ribazole + adenosylcob(III)inamide-GDP = adenosylcob(III)alamin + GMP + H(+). It catalyses the reaction alpha-ribazole 5'-phosphate + adenosylcob(III)inamide-GDP = adenosylcob(III)alamin 5'-phosphate + GMP + H(+). The protein operates within cofactor biosynthesis; adenosylcobalamin biosynthesis; adenosylcobalamin from cob(II)yrinate a,c-diamide: step 7/7. In terms of biological role, joins adenosylcobinamide-GDP and alpha-ribazole to generate adenosylcobalamin (Ado-cobalamin). Also synthesizes adenosylcobalamin 5'-phosphate from adenosylcobinamide-GDP and alpha-ribazole 5'-phosphate. In Sinorhizobium medicae (strain WSM419) (Ensifer medicae), this protein is Adenosylcobinamide-GDP ribazoletransferase.